The sequence spans 218 residues: Transmembrane gamma-carboxyglutamic acid protein 1 (218 aa).

Residues 1–20 constitute a propeptide that is removed on maturation; sequence MGRVFLTGEKANSVLKRYPR. Residues 20–66 enclose the Gla domain; that stretch reads RANGFFEEIRQGNIERECKEEFCTFEEAREAFENNEKTKEFWSTYTK. Topologically, residues 21 to 80 are extracellular; the sequence is ANGFFEEIRQGNIERECKEEFCTFEEAREAFENNEKTKEFWSTYTKAQQGESNRGSDWFQ. A disulfide bridge links cysteine 37 with cysteine 42. Residues 81-101 form a helical membrane-spanning segment; it reads FYLTFPLIFGLFIILLVIFLI. Residues 102-218 are Cytoplasmic-facing; that stretch reads WRCFLRNKTR…PMVPVVTTIK (117 aa). The tract at residues 161–195 is disordered; the sequence is TRLSNCDPPPTYEEATGQVNLQRSETEPHLDPPPE.

Post-translationally, gla residues are produced after subsequent post-translational modifications of glutamate by a vitamin K-dependent gamma-carboxylase.

Its subcellular location is the membrane. The sequence is that of Transmembrane gamma-carboxyglutamic acid protein 1 (PRRG1) from Pongo abelii (Sumatran orangutan).